The primary structure comprises 226 residues: 7-cyano-7-deazaguanine synthase (226 aa).

Position 9-19 (Leu9–Leu19) interacts with ATP. Zn(2+) contacts are provided by Cys189, Cys199, Cys202, and Cys205.

Belongs to the QueC family. It depends on Zn(2+) as a cofactor.

It carries out the reaction 7-carboxy-7-deazaguanine + NH4(+) + ATP = 7-cyano-7-deazaguanine + ADP + phosphate + H2O + H(+). It participates in purine metabolism; 7-cyano-7-deazaguanine biosynthesis. Catalyzes the ATP-dependent conversion of 7-carboxy-7-deazaguanine (CDG) to 7-cyano-7-deazaguanine (preQ(0)). This chain is 7-cyano-7-deazaguanine synthase, found in Cupriavidus pinatubonensis (strain JMP 134 / LMG 1197) (Cupriavidus necator (strain JMP 134)).